Here is a 119-residue protein sequence, read N- to C-terminus: Large ribosomal subunit protein bL20c (119 aa).

The protein belongs to the bacterial ribosomal protein bL20 family.

It is found in the plastid. It localises to the chloroplast. In terms of biological role, binds directly to 23S ribosomal RNA and is necessary for the in vitro assembly process of the 50S ribosomal subunit. It is not involved in the protein synthesizing functions of that subunit. The polypeptide is Large ribosomal subunit protein bL20c (rpl20) (Oryza sativa (Rice)).